Consider the following 2474-residue polypeptide: Highly reducing polyketide synthase 40 (2474 aa).

The Ketosynthase family 3 (KS3) domain maps to 1–294 (MFKETEIQQR…GSNAHIIIDD (294 aa)). Catalysis depends on for beta-ketoacyl synthase activity residues Cys42, His177, and His217. Residues 459-798 (FVFTGQGAQW…GYESVLRRGT (340 aa)) form the Malonyl-CoA:ACP transacylase (MAT) domain. The tract at residues 864–998 (HELLGAPVPD…GLVVTEYEQP (135 aa)) is N-terminal hotdog fold. Positions 864–1182 (HELLGAPVPD…ITTVARSEGA (319 aa)) constitute a PKS/mFAS DH domain. The Proton acceptor; for dehydratase activity role is filled by His896. Residues 1027–1182 (KVETSFRQLY…ITTVARSEGA (156 aa)) form a C-terminal hotdog fold region. Residue Asp1093 is the Proton donor; for dehydratase activity of the active site. Residues 1232–1535 (VEMMCFLYIK…DLHIYDFPDH (304 aa)) are methyltransferase (CMet) domain. The Enoyl reductase (ER) domain occupies 1770–2063 (GLLDSLQFQD…SGSHMGKLVL (294 aa)). One can recognise a Ketoreductase (KR) domain in the interval 2087-2263 (ASYLLSGGLG…PGVAVDLGMI (177 aa)). The 78-residue stretch at 2385-2462 (DAAKIVSAAI…ELAELAAKRS (78 aa)) folds into the Carrier domain. Ser2422 is subject to O-(pantetheine 4'-phosphoryl)serine.

Pantetheine 4'-phosphate serves as cofactor.

The protein operates within secondary metabolite biosynthesis. In terms of biological role, highly reducing polyketide synthase; part of the gene cluster that mediates the biosynthesis of the gamma-pyrones fusapyrone (FPY) and deoxyfusapyrone (dFPY). FPY is an undecaketide and thus likely synthesized by the polyketide synthase FPY1 from acetyl-CoA functioning as starter unit and the addition of 10 malonyl-CoA extender units by successive Claisen-condensations. Next to this, FPY shares some rare features: C-glycosylated 4-deoxyglucose at C-3, a gem-dimethyl group at C-13, and an alpha-beta to beta-gamma double bond shift at C-20. During FPY biosynthesis mono-C-methyl groups are transferred to the tetra-, penta-, hexa- and heptaketide, while two C-methyl groups are transferred to the nonaketide, suggesting that the CMet domain is programmed to selectively catalyze two successive C-alpha-methylation reactions of the nonaketide, while other alpha-carbons are non- or mono-methylated only. While the origin of the 4'-deoxyglucose moiety remains opaque, its transfer to C-3 is most likely mediated by the C-glycosyltransferase FPY2. Next to this, the hydroxyl group present at C-33 and discriminating between FPY and dFPY, is likely to be installed by the cytochrome P450 monooxygenase FPY7. No putative function can be predicted for the remaining genes FPY3-FPY6. The polypeptide is Highly reducing polyketide synthase 40 (Fusarium mangiferae (Mango malformation disease fungus)).